The chain runs to 566 residues: Arginine--tRNA ligase (566 aa).

A 'HIGH' region motif is present at residues 121–131 (ANPNGPFHIGH).

The protein belongs to the class-I aminoacyl-tRNA synthetase family.

Its subcellular location is the cytoplasm. The enzyme catalyses tRNA(Arg) + L-arginine + ATP = L-arginyl-tRNA(Arg) + AMP + diphosphate. The polypeptide is Arginine--tRNA ligase (Methanococcus maripaludis (strain C7 / ATCC BAA-1331)).